The primary structure comprises 600 residues: Proline--tRNA ligase (600 aa).

Belongs to the class-II aminoacyl-tRNA synthetase family. ProS type 1 subfamily. In terms of assembly, homodimer.

It localises to the cytoplasm. It carries out the reaction tRNA(Pro) + L-proline + ATP = L-prolyl-tRNA(Pro) + AMP + diphosphate. In terms of biological role, catalyzes the attachment of proline to tRNA(Pro) in a two-step reaction: proline is first activated by ATP to form Pro-AMP and then transferred to the acceptor end of tRNA(Pro). As ProRS can inadvertently accommodate and process non-cognate amino acids such as alanine and cysteine, to avoid such errors it has two additional distinct editing activities against alanine. One activity is designated as 'pretransfer' editing and involves the tRNA(Pro)-independent hydrolysis of activated Ala-AMP. The other activity is designated 'posttransfer' editing and involves deacylation of mischarged Ala-tRNA(Pro). The misacylated Cys-tRNA(Pro) is not edited by ProRS. This Prochlorococcus marinus (strain MIT 9211) protein is Proline--tRNA ligase.